The following is a 388-amino-acid chain: STE20-related kinase adapter protein strd-1 (388 aa).

A Protein kinase domain is found at 52–335; that stretch reads YDCVRYMGTC…ASDLKSSAWL (284 aa). Residues 58–66 and Lys82 contribute to the ATP site; that span reads MGTCNGGQI.

It belongs to the protein kinase superfamily. STE Ser/Thr protein kinase family. STE20 subfamily. Interacts with sad-1. Interacts with par-4. In terms of tissue distribution, expressed in nervous system, pharynx and excretory canal. Expressed in germline.

It is found in the perikaryon. The protein resides in the nucleus. It localises to the cell projection. The protein localises to the dendrite. Its subcellular location is the axon. It is found in the synapse. The protein resides in the cytoplasm. It localises to the cell cortex. Functionally, pseudokinase which may act as an adapter for kinases sad-1 and par-4 and thereby is involved in several developmental processes. Regulates cell-autonomously both neuronal polarity and synaptic organization when bound to sad-1. Required for sad-1 localization to synapses. Required to establish germline stem cell (GSC) quiescence during dauer development, to promote cell shedding during embryogenesis and to control asymmetric cell division of the Q.p neuroblast lineage, probably when bound to par-4. May be involved in maintaining the integrity of the early embryonic cortex when bound to par-4. This Caenorhabditis elegans protein is STE20-related kinase adapter protein strd-1.